Reading from the N-terminus, the 240-residue chain is Eukaryotic translation initiation factor 4E-2 (240 aa).

Positions Met-1–Glu-29 are disordered. The span at Ile-17–Ser-26 shows a compositional bias: polar residues. EIF4G-binding stretches follow at residues His-65–Gln-68 and Phe-75–His-111. MRNA contacts are provided by residues Asn-83–Gly-88, Lys-115, and Trp-133–Glu-134. A disulfide bridge links Cys-138 with Cys-176. Positions Asn-159–Gln-168 are EIF4G-binding. MRNA contacts are provided by residues Arg-183–Arg-188 and Lys-228–Arg-232.

Belongs to the eukaryotic initiation factor 4E family. EIF4F is a multi-subunit complex, the composition of which varies with external and internal environmental conditions. It is composed of at least EIF4A, EIF4E and EIF4G. EIF4E is also known to interact with other partners. In higher plants two isoforms of EIF4F have been identified, named isoform EIF4F and isoform EIF(iso)4F. Isoform EIF4F has subunits p220 and p26, whereas isoform EIF(iso)4F has subunits p82 and p28. In terms of processing, according to the redox status, the Cys-138-Cys-176 disulfide bridge may have a role in regulating protein function by affecting its ability to bind capped mRNA.

The protein localises to the nucleus. It localises to the cytoplasm. Functionally, component of the protein complex eIF4F, which is involved in the recognition of the mRNA cap, ATP-dependent unwinding of 5'-terminal secondary structure and recruitment of mRNA to the ribosome. Recognizes and binds the 7-methylguanosine-containing mRNA cap during an early step in the initiation of protein synthesis and facilitates ribosome binding by inducing the unwinding of the mRNAs secondary structures. This Arabidopsis thaliana (Mouse-ear cress) protein is Eukaryotic translation initiation factor 4E-2.